The sequence spans 891 residues: DNA mismatch repair protein MutS (891 aa).

Gly639–Ser646 serves as a coordination point for ATP. The interval Thr827–Phe854 is disordered.

Belongs to the DNA mismatch repair MutS family.

In terms of biological role, this protein is involved in the repair of mismatches in DNA. It is possible that it carries out the mismatch recognition step. This protein has a weak ATPase activity. The polypeptide is DNA mismatch repair protein MutS (Treponema denticola (strain ATCC 35405 / DSM 14222 / CIP 103919 / JCM 8153 / KCTC 15104)).